Consider the following 491-residue polypeptide: Probable diguanylate cyclase CdgI (491 aa).

At 1–54 (MIQSTRISMGLFFKYFLSLTKIDPGQNYISLPSIKSSTHIALLFMVSMGTQKLK) the chain is on the cytoplasmic side. A helical transmembrane segment spans residues 55–75 (AQSFFIFSLLLTLILFCITTL). The Periplasmic segment spans residues 76 to 89 (YNENTNVKLIPQMN). A helical transmembrane segment spans residues 90–110 (YLMVVVALFFLNAVIFLFMLM). Residues 111-121 (KYFTNKQILPT) lie on the Cytoplasmic side of the membrane. A helical membrane pass occupies residues 122-142 (LILSLAFLSGLIYLVETIVII). Residues 143–158 (HKPINGSTLIQTKSND) lie on the Periplasmic side of the membrane. Residues 159–179 (VSIFYIFRQLSFICLTSLALF) form a helical membrane-spanning segment. The Cytoplasmic segment spans residues 180–193 (CYGKDNILDNNKKK). The chain crosses the membrane as a helical span at residues 194–214 (TGILLLALIPFLVFPLLAHNL). Residues 215-236 (SSYNADYSLYVVDYCPDNHTAT) lie on the Periplasmic side of the membrane. The chain crosses the membrane as a helical span at residues 237-257 (WGINYTKILVCLWAFLLFFII). Residues 258-265 (MRTRLASE) are Cytoplasmic-facing. The helical transmembrane segment at 266-286 (LWPLIALLCLASLCCNLLLLT) threads the bilayer. Topologically, residues 287–293 (LDEYNYT) are periplasmic. Residues 294 to 314 (IWYISRGIEVSSKLFVVSFLI) traverse the membrane as a helical segment. Over 315-491 (YNIFQELQLS…GGNKVIIHHI (177 aa)) the chain is Cytoplasmic. In terms of domain architecture, GGDEF spans 356-491 (KDFCVMLVDI…GGNKVIIHHI (136 aa)). Mg(2+) contacts are provided by D364 and I365. The substrate site is built by N372, H377, and D381. E407 contributes to the Mg(2+) binding site. The active-site Proton acceptor is the E407. R427 serves as a coordination point for substrate.

In terms of assembly, homodimer. Mg(2+) serves as cofactor.

Its subcellular location is the cell inner membrane. The catalysed reaction is 2 GTP = 3',3'-c-di-GMP + 2 diphosphate. The protein operates within purine metabolism; 3',5'-cyclic di-GMP biosynthesis. Its function is as follows. Catalyzes the synthesis of cyclic-di-GMP (c-di-GMP) via the condensation of 2 GTP molecules. This Escherichia coli (strain K12) protein is Probable diguanylate cyclase CdgI.